A 64-amino-acid polypeptide reads, in one-letter code: Large ribosomal subunit protein bL35 (64 aa).

This sequence belongs to the bacterial ribosomal protein bL35 family.

This chain is Large ribosomal subunit protein bL35, found in Aliivibrio fischeri (strain ATCC 700601 / ES114) (Vibrio fischeri).